The chain runs to 127 residues: Small ribosomal subunit protein uS11c (127 aa).

It belongs to the universal ribosomal protein uS11 family. Part of the 30S ribosomal subunit.

The protein localises to the plastid. It localises to the chloroplast. This is Small ribosomal subunit protein uS11c from Heterosigma akashiwo (strain NIES-293 / 8280G21-1).